Reading from the N-terminus, the 325-residue chain is 5-dehydro-2-deoxygluconokinase (325 aa).

This sequence belongs to the carbohydrate kinase PfkB family.

The enzyme catalyses 5-dehydro-2-deoxy-D-gluconate + ATP = 6-phospho-5-dehydro-2-deoxy-D-gluconate + ADP + H(+). Its pathway is polyol metabolism; myo-inositol degradation into acetyl-CoA; acetyl-CoA from myo-inositol: step 5/7. Catalyzes the phosphorylation of 5-dehydro-2-deoxy-D-gluconate (2-deoxy-5-keto-D-gluconate or DKG) to 6-phospho-5-dehydro-2-deoxy-D-gluconate (DKGP). In Listeria monocytogenes serotype 4a (strain HCC23), this protein is 5-dehydro-2-deoxygluconokinase.